Reading from the N-terminus, the 240-residue chain is Uridylate kinase (240 aa).

13-16 (KASG) is a binding site for ATP. The interval 21–26 (GAQGFG) is involved in allosteric activation by GTP. A UMP-binding site is contributed by glycine 55. Residues glycine 56 and arginine 60 each contribute to the ATP site. Residues aspartate 75 and 136-143 (TGNPFFTT) contribute to the UMP site. Threonine 163, glutamine 164, tyrosine 169, and aspartate 172 together coordinate ATP.

It belongs to the UMP kinase family. Homohexamer.

The protein resides in the cytoplasm. The enzyme catalyses UMP + ATP = UDP + ADP. Its pathway is pyrimidine metabolism; CTP biosynthesis via de novo pathway; UDP from UMP (UMPK route): step 1/1. With respect to regulation, allosterically activated by GTP. Inhibited by UTP. Its function is as follows. Catalyzes the reversible phosphorylation of UMP to UDP. The sequence is that of Uridylate kinase from Rhizobium etli (strain ATCC 51251 / DSM 11541 / JCM 21823 / NBRC 15573 / CFN 42).